A 340-amino-acid polypeptide reads, in one-letter code: Peroxisomal coenzyme A diphosphatase 1, peroxisomal (340 aa).

The transit peptide at 1–7 (MILSQRR) directs the protein to the peroxisome. Positions 37 to 199 (KRNSAVIILL…DEDVKSYQAE (163 aa)) constitute a Nudix hydrolase domain. A Nudix box motif is present at residues 77 to 99 (GKADYFQETFESVARREAEEEIG). The Mg(2+) site is built by glutamate 93 and glutamate 97.

The protein belongs to the Nudix hydrolase family. PCD1 subfamily. Mn(2+) serves as cofactor. Mg(2+) is required as a cofactor. The size of the cleaved transit peptide can be of 7 or 8 residues.

It is found in the peroxisome. The catalysed reaction is CoA + H2O = (R)-4'-phosphopantetheine + adenosine 3',5'-bisphosphate + 2 H(+). It carries out the reaction CoA-disulfide + H2O = 4'-phosphopantetheinyl-CoA disulfide + adenosine 3',5'-bisphosphate + 2 H(+). The enzyme catalyses 8-oxo-dGTP + H2O = 8-oxo-dGMP + diphosphate + H(+). It catalyses the reaction 2-oxo-dATP + H2O = 2-oxo-dAMP + diphosphate + H(+). Its function is as follows. Diphosphatase (pyrophosphatase) with specificity for coenzyme A and CoA derivatives. Catalyzes the hydrolysis of the diphosphate linkage in CoA to give 3',5'-ADP and 4'-phosphopantetheine. Prefers oxidized CoA disulfide (CoASSCoA) over CoA as a substrate. May be required to remove potentially toxic oxidized CoA disulfide from peroxisomes to maintain the capacity for beta-oxidation of fatty acids. Can also hydrolyze 8-oxo-dGTP and 2-OH-dATP in vitro; therefore it may function as a sanitizing enzyme for oxidized nucleotides and may contribute to prevention of spontaneous mutagenesis due to the misincorporation of these oxidized nucleotides during DNA synthesis. Shows moderate activity in vitro with several short chain acyl-CoA esters and very low activity on 3'-dephospho-CoA while is not active with (deoxy)nucleoside 5'-triphosphates, nucleoside 5'-di- or monophosphates, diadenosine polyphosphates, nucleoside 5'-diphosphosugars, cytidine 5'-diphosphoalcohols, NAD(+), NADH, or FAD. The polypeptide is Peroxisomal coenzyme A diphosphatase 1, peroxisomal (PCD1) (Saccharomyces cerevisiae (strain ATCC 204508 / S288c) (Baker's yeast)).